Reading from the N-terminus, the 332-residue chain is L-lactate dehydrogenase A chain (332 aa).

NAD(+)-binding positions include 29 to 57 and arginine 99; that span reads GAVGMACAISILMKDLADELALVDVIEDK. The substrate site is built by arginine 106, asparagine 138, and arginine 169. Residue asparagine 138 coordinates NAD(+). Catalysis depends on histidine 193, which acts as the Proton acceptor. Threonine 248 contacts substrate.

Belongs to the LDH/MDH superfamily. LDH family. As to quaternary structure, homotetramer.

It localises to the cytoplasm. It carries out the reaction (S)-lactate + NAD(+) = pyruvate + NADH + H(+). It functions in the pathway fermentation; pyruvate fermentation to lactate; (S)-lactate from pyruvate: step 1/1. Functionally, interconverts simultaneously and stereospecifically pyruvate and lactate with concomitant interconversion of NADH and NAD(+). This chain is L-lactate dehydrogenase A chain (LDHA), found in Pelodiscus sinensis japonicus (Chinese soft-shelled turtle).